The chain runs to 210 residues: MKVNVSCSSVQTTIDILEENQGEDESILTLGQLRDRIATDNDVDVETMKLLHRGKFLQGADDVSLSTLNFKENDKIIVMGGKNALVDDAGFKMLMQYEKHNLSNLQKAYDLNLRDVADLERGFLEKPKQVEMGKKLEKKVKYFNEEAERHLETLDGMNIITETTPENQAKRNREKRKTLVNGIQTLLNQNDALLRRLQEYQSVLNGDIPE.

Residues 8-85 (SSVQTTIDIL…IIVMGGKNAL (78 aa)) form the Ubiquitin-like domain. The BAG domain occupies 108 to 194 (AYDLNLRDVA…TLLNQNDALL (87 aa)).

In terms of assembly, homodimer or homotetramer.

Its function is as follows. May inhibit the chaperone activity of HSP70/HSC70 by promoting substrate release in an ATP-dependent manner. This chain is BAG family molecular chaperone regulator 1 (bag-1), found in Caenorhabditis elegans.